A 970-amino-acid chain; its full sequence is UvrABC system protein A (970 aa).

34-41 (GVSGSGKS) contacts ATP. A C4-type zinc finger spans residues 284–311 (CPEHGAVMDELSPRLFSFNSPYGACPDC). ABC transporter domains follow at residues 340 to 617 (WSEK…QRSL) and 637 to 965 (GNGA…KYLA). 669–676 (GVSGSGKS) provides a ligand contact to ATP. Residues 768-794 (CEACAGQGVNVIEMNFLPDVYVQCDVC) form a C4-type zinc finger.

Belongs to the ABC transporter superfamily. UvrA family. In terms of assembly, forms a heterotetramer with UvrB during the search for lesions.

It is found in the cytoplasm. The UvrABC repair system catalyzes the recognition and processing of DNA lesions. UvrA is an ATPase and a DNA-binding protein. A damage recognition complex composed of 2 UvrA and 2 UvrB subunits scans DNA for abnormalities. When the presence of a lesion has been verified by UvrB, the UvrA molecules dissociate. This chain is UvrABC system protein A, found in Synechocystis sp. (strain ATCC 27184 / PCC 6803 / Kazusa).